Consider the following 153-residue polypeptide: 6,7-dimethyl-8-ribityllumazine synthase (153 aa).

5-amino-6-(D-ribitylamino)uracil contacts are provided by residues phenylalanine 21, 55–57, and 79–81; these read AFE and TVI. 84–85 lines the (2S)-2-hydroxy-3-oxobutyl phosphate pocket; the sequence is AT. Residue histidine 87 is the Proton donor of the active site. Phenylalanine 112 provides a ligand contact to 5-amino-6-(D-ribitylamino)uracil. (2S)-2-hydroxy-3-oxobutyl phosphate is bound at residue arginine 126.

It belongs to the DMRL synthase family. Forms an icosahedral capsid composed of 60 subunits, arranged as a dodecamer of pentamers.

It catalyses the reaction (2S)-2-hydroxy-3-oxobutyl phosphate + 5-amino-6-(D-ribitylamino)uracil = 6,7-dimethyl-8-(1-D-ribityl)lumazine + phosphate + 2 H2O + H(+). The protein operates within cofactor biosynthesis; riboflavin biosynthesis; riboflavin from 2-hydroxy-3-oxobutyl phosphate and 5-amino-6-(D-ribitylamino)uracil: step 1/2. Functionally, catalyzes the formation of 6,7-dimethyl-8-ribityllumazine by condensation of 5-amino-6-(D-ribitylamino)uracil with 3,4-dihydroxy-2-butanone 4-phosphate. This is the penultimate step in the biosynthesis of riboflavin. The polypeptide is 6,7-dimethyl-8-ribityllumazine synthase (Bacillus cereus (strain B4264)).